The sequence spans 2214 residues: Sortilin-related receptor (2214 aa).

The first 28 residues, 1-28 (MATRSSRRESRLPFLFTLVALLPPGALC), serve as a signal peptide directing secretion. Residues 29-81 (EVWTQRLHGGSAPLPQDRGFLVVQGDPRELRLWARGDARGASRADEKPLRRKR) constitute a propeptide, removed in mature form. The Cell attachment site motif lies at 63–65 (RGD). The Lumenal segment spans residues 82–2137 (SAALQPEPIK…TQAARSTDVA (2056 aa)). An N-linked (GlcNAc...) asparagine glycan is attached at N99. S114 is subject to Phosphoserine. The BNR 1 repeat unit spans residues 136-147 (YVSYDYGKSFKK). N158 is a glycosylation site (N-linked (GlcNAc...) asparagine). A BNR 2 repeat occupies 232–243 (WKSDDFGQTWIM). Residues N368 and N430 are each glycosylated (N-linked (GlcNAc...) asparagine). 3 BNR repeats span residues 441–452 (VITFDKGGTWEF), 521–532 (YISSSAGARWRE), and 562–573 (KYSTNEGETWKT). N616, N674, N818, and N871 each carry an N-linked (GlcNAc...) asparagine glycan. 5 LDL-receptor class B repeats span residues 800-843 (NCLY…EPLS), 844-887 (QLLY…VPQE), 888-932 (GVMF…DDQW), 933-970 (IYWT…AVFK), and 971-1013 (NEIY…FYKG). The EGF-like domain maps to 1026–1072 (CSLLCLPKANNSRSCRCPEDVSSSVLPSGDLMCDCPQGYQLKNNTCV). N-linked (GlcNAc...) asparagine glycans are attached at residues N1035 and N1068. LDL-receptor class A domains are found at residues 1076 to 1114 (NTCL…NCPT), 1115 to 1155 (TICD…HCEM), 1156 to 1194 (HQCR…NCTA), 1198 to 1236 (TCEA…VNCE), 1238 to 1272 (KCNG…QHCE), 1273 to 1317 (PLCT…GCSQ), 1323 to 1361 (KVCD…NCEN), 1366 to 1405 (PNCS…DCGD), and 1417 to 1455 (STCL…ACPL). 21 cysteine pairs are disulfide-bonded: C1078–C1090, C1085–C1103, C1097–C1112, C1117–C1131, C1125–C1144, C1138–C1153, C1158–C1170, C1165–C1183, C1177–C1192, C1199–C1211, C1206–C1224, C1218–C1235, C1239–C1249, C1244–C1262, C1256–C1271, C1275–C1289, C1283–C1302, C1296–C1315, C1325–C1337, C1332–C1350, and C1344–C1359. The N-linked (GlcNAc...) asparagine glycan is linked to N1164. N1191 carries N-linked (GlcNAc...) asparagine glycosylation. N1246 is a glycosylation site (N-linked (GlcNAc...) asparagine). N1367 is a glycosylation site (N-linked (GlcNAc...) asparagine). Intrachain disulfides connect C1368–C1381, C1376–C1394, C1388–C1403, C1419–C1431, C1426–C1444, and C1438–C1453. N1458 carries N-linked (GlcNAc...) asparagine glycosylation. LDL-receptor class A domains are found at residues 1469–1508 (GRCD…NCPT) and 1512–1551 (LTCM…ACSD). 6 disulfide bridges follow: C1471-C1484, C1478-C1497, C1491-C1506, C1514-C1527, C1521-C1540, and C1534-C1549. Fibronectin type-III domains are found at residues 1557–1649 (KVQN…TPEG), 1653–1745 (APRN…TIKG), 1749–1844 (PPPD…VRPP), 1843–1927 (PPAP…VVKM), 1934–2029 (PPRH…APDA), and 2030–2118 (LKII…LYDE). N-linked (GlcNAc...) asparagine glycosylation is found at N1608, N1706, N1733, N1809, N1854, N1894, N1986, N2010, N2054, N2069, N2076, and N2092. A helical membrane pass occupies residues 2138–2158 (AVVVPILFLILLSLGVGFAIL). Residues 2159-2214 (YTKHRRLQSSFTAFANSHYSSRLGSAIFSSGDDLGEDDEDAPMITGFSDDVPMVIA) lie on the Cytoplasmic side of the membrane. A Potential nuclear localization signal for the C-terminal fragment generated by PSEN1 motif is present at residues 2161–2164 (KHRR). Residues 2172–2177 (FANSHY) carry the Endocytosis signal motif. The required for efficient Golgi apparatus - endosome sorting stretch occupies residues 2190 to 2214 (DDLGEDDEDAPMITGFSDDVPMVIA). The tract at residues 2201-2214 (MITGFSDDVPMVIA) is required for interaction with GGA1 and GGA2. S2206 is subject to Phosphoserine; by ROCK2. Residues 2208-2212 (DVPMV) carry the DXXLL motif involved in the interaction with GGA1 motif.

Belongs to the VPS10-related sortilin family. SORL1 subfamily. After maturation cleavage, interacts (via N-terminus) with its own propeptide; this interaction prevents interaction with other ligands, including CRLF1, GDNF, GFRA1, IL6 and IL6R. Interacts (via N-terminal ectodomain) with APP, forming a 1:1 stoichiometric complex, including with isoforms APP695, APP751 and APP770; this interaction retains APP in the trans-Golgi network and reduces processing into soluble APP-alpha and amyloid-beta peptides. Also interacts with APP C-terminal fragment C99 and with Abeta40. Interacts with beta-secretase BACE1/BACE; this interaction may affect BACE1-binding to APP and hence reduce BACE1-dependent APP cleavage. Interacts with LRPAP1/RAP. Interacts (via C-terminal cytosolic domain) with GGA1 and GGA2 (via N-terminal VHS domain). Interacts with PACS1. May interact (via the N-terminal ectodomain) with the morphogenetic neuropeptide, also called head activator or HA; this interaction is impaired in the presence of propeptide. Interacts with neurotensin/NTS. Interacts (via the N-terminal ectodomain) with PDGFB homodimer. Interacts (via N-terminal ectodomain) with the uPA receptor PLAUR; this interaction decreases PLAUR internalization. Interacts (via N-terminal ectodomain) with uPA/PLAU and PAI1/SERPINE1, either individually or in complex with each other, leading to endocytosis; this interaction is abolished in the presence of LRPAP1. Also interacts with the ternary complex composed of PLAUR-PLAU-PAI1. Also interacts with tPA/PLAT either alone or in complex with SERPINE1. Interacts (via C-terminus) with AP-1 and AP-2 complexes. Interacts with BMPR1A and BMPR1B. Interacts with lipoprotein lipase LPL; this interaction is optimal in slightly acidic conditions. Interacts (via N-terminal ectodomain) with GDNF (via propeptide) and GDNF receptor alpha-1/GFRA1, either individually or in complex with each other. The interaction with GDNF occurs mostly intracellularly. Also interacts with other GDNF receptor alpha family members, including GFRA2, GFRA3 and GFRA4. Interacts with the insulin receptor INSR; this interaction strongly increases the surface exposure of INSR. Interacts (via cytosolic C-terminus) with STK39/SPAK. Interacts (via N-terminal ectodomain) with the heterodimeric complex CRLF1-CLC; within this complex, the interaction is mediated predominantly by the CRLF1 moiety. Interacts with CNTFR, as well as with the tripartite signaling complex formed by CRLF1, CLC and CNTFR. Interacts (via N-terminal ectodomain) with IL6; this interaction leads to IL6 internalization and lysosomal degradation. Binding of SOLRL1 secreted N-terminal ectodomain to IL6 may increase IL6 trans signaling. Interacts with secreted IL6R; this interaction leads to IL6R internalization. Also interacts with transmembrane IL6R; this interaction does not affect IL6R subcellular location. Interacts with APOE. Interacts with apolipoprotein E-rich beta-VLDL. Interacts with APOA5; this interaction leads to APOA5 internalization and is abolished by heparin. Interaction with APOA5 results in enhanced binding to chylomicrons. Interacts with ROCK2. Interacts (via cytosolic C-terminus) with PPP3CB/calcineurin A beta. Interacts with NTRK2/TRKB; this interaction facilitates NTRK2 trafficking between synaptic plasma membranes, postsynaptic densities and cell soma, hence positively regulates BDNF signaling. Interacts (via cytosolic C-terminus) with HSPA12A in an ADP-dependent manner; this interaction affects SORL1 internalization and subcellular localization. Interacts (via N-terminal ectodomain) with ERBB2/HER2. Within the Golgi apparatus, the propeptide may be cleaved off by FURIN or a furin-like protease. After cleavage, the propeptide interacts with the mature protein N-terminus, preventing the association with other ligands. At the cell surface, partially subjected to proteolytic shedding that releases the ectodomain in the extracellular milieu. The shedding may be catalyzed by ADAM17/TACE. Following shedding, PSEN1/presenilin-1 cleaves the remaining transmembrane fragment and catalyzes the release of a C-terminal fragment in the cytosol and of a soluble N-terminal beta fragment in the extracellular milieu. The C-terminal cytosolic fragment localizes to the nucleus. In terms of processing, phosphorylation at Ser-2206 facilitates the interaction with GGA1. Highly expressed in brain (at protein level). Most abundant in the cerebellum, cerebral cortex and occipital pole; low levels in the putamen and thalamus. Expression is significantly reduced in the frontal cortex of patients suffering from Alzheimer disease. Also expressed in spinal cord, spleen, testis, prostate, ovary, thyroid and lymph nodes.

It is found in the golgi apparatus membrane. Its subcellular location is the golgi apparatus. The protein localises to the trans-Golgi network membrane. The protein resides in the endosome membrane. It localises to the early endosome membrane. It is found in the recycling endosome membrane. Its subcellular location is the endoplasmic reticulum membrane. The protein localises to the endosome. The protein resides in the multivesicular body membrane. It localises to the cell membrane. It is found in the cytoplasmic vesicle. Its subcellular location is the secretory vesicle membrane. The protein localises to the secreted. In terms of biological role, sorting receptor that directs several proteins to their correct location within the cell. Along with AP-1 complex, involved Golgi apparatus - endosome sorting. Sorting receptor for APP, regulating its intracellular trafficking and processing into amyloidogenic-beta peptides. Retains APP in the trans-Golgi network, hence preventing its transit through late endosomes where amyloid beta peptides Abeta40 and Abeta42 are generated. May also sort newly produced amyloid-beta peptides to lysosomes for catabolism. Does not affect APP trafficking from the endoplasmic reticulum to Golgi compartments. Sorting receptor for the BDNF receptor NTRK2/TRKB that facilitates NTRK2 trafficking between synaptic plasma membranes, postsynaptic densities and cell soma, hence positively regulates BDNF signaling by controlling the intracellular location of its receptor. Sorting receptor for GDNF that promotes GDNF regulated, but not constitutive secretion. Sorting receptor for the GDNF-GFRA1 complex, directing it from the cell surface to endosomes. GDNF is then targeted to lysosomes and degraded, while its receptor GFRA1 recycles back to the cell membrane, resulting in a GDNF clearance pathway. The SORL1-GFRA1 complex further targets RET for endocytosis, but not for degradation, affecting GDNF-induced neurotrophic activities. Sorting receptor for ERBB2/HER2. Regulates ERBB2 subcellular distribution by promoting its recycling after internalization from endosomes back to the plasma membrane, hence stimulating phosphoinositide 3-kinase (PI3K)-dependent ERBB2 signaling. In ERBB2-dependent cancer cells, promotes cell proliferation. Sorting receptor for lipoprotein lipase LPL. Promotes LPL localization to endosomes and later to the lysosomes, leading to degradation of newly synthesized LPL. Potential sorting receptor for APOA5, inducing APOA5 internalization to early endosomes, then to late endosomes, wherefrom a portion is sent to lysosomes and degradation, another portion is sorted to the trans-Golgi network. Sorting receptor for the insulin receptor INSR. Promotes recycling of internalized INSR via the Golgi apparatus back to the cell surface, thereby preventing lysosomal INSR catabolism, increasing INSR cell surface expression and strengthening insulin signal reception in adipose tissue. Does not affect INSR internalization. Plays a role in renal ion homeostasis, controlling the phospho-regulation of SLC12A1/NKCC2 by STK39/SPAK kinase and PPP3CB/calcineurin A beta phosphatase, possibly through intracellular sorting of STK39 and PPP3CB. Stimulates, via the N-terminal ectodomain, the proliferation and migration of smooth muscle cells, possibly by increasing cell surface expression of the urokinase receptor uPAR/PLAUR. This may promote extracellular matrix proteolysis and hence facilitate cell migration. By acting on the migration of intimal smooth muscle cells, may accelerate intimal thickening following vascular injury. Promotes adhesion of monocytes. Stimulates proliferation and migration of monocytes/macrophages. Through its action on intimal smooth muscle cells and macrophages, may accelerate intimal thickening and macrophage foam cell formation in the process of atherosclerosis. Regulates hypoxia-enhanced adhesion of hematopoietic stem and progenitor cells to the bone marrow stromal cells via a PLAUR-mediated pathway. This function is mediated by the N-terminal ectodomain. Metabolic regulator, which functions to maintain the adequate balance between lipid storage and oxidation in response to changing environmental conditions, such as temperature and diet. The N-terminal ectodomain negatively regulates adipose tissue energy expenditure, acting through the inhibition the BMP/Smad pathway. May regulate signaling by the heterodimeric neurotrophic cytokine CLCF1-CRLF1 bound to the CNTFR receptor by promoting the endocytosis of the tripartite complex CLCF1-CRLF1-CNTFR and lysosomal degradation. May regulate IL6 signaling, decreasing cis signaling, possibly by interfering with IL6-binding to membrane-bound IL6R, while up-regulating trans signaling via soluble IL6R. The chain is Sortilin-related receptor (SORL1) from Homo sapiens (Human).